The following is a 173-amino-acid chain: Lipoprotein signal peptidase (173 aa).

The next 3 membrane-spanning stretches (helical) occupy residues 12–32, 67–87, and 102–122; these read WLWL…WTIQ, WQRY…VYLL, and ALIL…GYVI. Catalysis depends on residues Asp-123 and Asp-141. Residues 137–157 traverse the membrane as a helical segment; it reads FNIADSAIFTGAVIMIFESFF.

This sequence belongs to the peptidase A8 family.

It is found in the cell inner membrane. The enzyme catalyses Release of signal peptides from bacterial membrane prolipoproteins. Hydrolyzes -Xaa-Yaa-Zaa-|-(S,diacylglyceryl)Cys-, in which Xaa is hydrophobic (preferably Leu), and Yaa (Ala or Ser) and Zaa (Gly or Ala) have small, neutral side chains.. Its pathway is protein modification; lipoprotein biosynthesis (signal peptide cleavage). In terms of biological role, this protein specifically catalyzes the removal of signal peptides from prolipoproteins. In Psychromonas ingrahamii (strain DSM 17664 / CCUG 51855 / 37), this protein is Lipoprotein signal peptidase.